The primary structure comprises 277 residues: PHD finger protein ALFIN-LIKE 9 (277 aa).

Disordered regions lie at residues K138 to H206 and P255 to S277. The span at S145–T160 shows a compositional bias: low complexity. A PHD-type zinc finger spans residues E208–G260. Residues G259–N270 show a composition bias toward gly residues.

Belongs to the Alfin family. As to quaternary structure, interacts with H3K4me3 and to a lesser extent with H3K4me2.

The protein localises to the nucleus. Histone-binding component that specifically recognizes H3 tails trimethylated on 'Lys-4' (H3K4me3), which mark transcription start sites of virtually all active genes. The protein is PHD finger protein ALFIN-LIKE 9 of Oryza sativa subsp. indica (Rice).